A 380-amino-acid polypeptide reads, in one-letter code: Dynactin subunit 2 (380 aa).

Residues M1 to N40 are disordered. The span at E21–N40 shows a compositional bias: acidic residues. Coiled coils occupy residues V100–D135 and E353–S377.

The protein belongs to the dynactin subunit 2 family. Subunit of dynactin, a multiprotein complex associated with dynein.

The protein resides in the cytoplasm. It localises to the cytoskeleton. Its subcellular location is the membrane. Modulates cytoplasmic dynein binding to an organelle, and plays a role in prometaphase chromosome alignment and spindle organization during mitosis. May play a role in synapse formation during brain development. In Drosophila pseudoobscura pseudoobscura (Fruit fly), this protein is Dynactin subunit 2.